A 359-amino-acid chain; its full sequence is DNA integrity scanning protein DisA (359 aa).

The region spanning 10–148 is the DAC domain; sequence ELDLLDIVQF…GNRRYTLKDI (139 aa). ATP contacts are provided by residues Gly-77, Leu-95, and 108–112; that span reads MRHRT.

It belongs to the DisA family. In terms of assembly, homooctamer. Requires Mg(2+) as cofactor.

The catalysed reaction is 2 ATP = 3',3'-c-di-AMP + 2 diphosphate. Its function is as follows. Participates in a DNA-damage check-point that is active prior to asymmetric division when DNA is damaged. DisA forms globular foci that rapidly scan along the chromosomes during sporulation, searching for lesions. When a lesion is present, DisA pauses at the lesion site. This triggers a cellular response that culminates in a temporary block in sporulation initiation. In terms of biological role, also has diadenylate cyclase activity, catalyzing the condensation of 2 ATP molecules into cyclic di-AMP (c-di-AMP). c-di-AMP acts as a signaling molecule that couples DNA integrity with progression of sporulation. The rise in c-di-AMP level generated by DisA while scanning the chromosome, operates as a positive signal that advances sporulation; upon encountering a lesion, the DisA focus arrests at the damaged site and halts c-di-AMP synthesis. The sequence is that of DNA integrity scanning protein DisA from Bacillus pumilus (strain SAFR-032).